Reading from the N-terminus, the 198-residue chain is MHYPEPISKLIDSFMKLPGIGPKTAVRLAFFVLDMKEDDVLDFAKSLVNAKRNLTYCSVCGHITDRDPCYICDDSHRDQSVVCVVQEPKDVIAMEKMKEYQGVYHVLRGAISPMEGIGPEDINIPQLLKRLQDETVQEVILATNPNIEGEATAMYISRLLKPTGIKVTRIAHGLPVGGDLEYADEVTLSKALEGRREV.

The C4-type zinc finger occupies 57–72 (CSVCGHITDRDPCYIC). Residues 80 to 175 (SVVCVVQEPK…KVTRIAHGLP (96 aa)) form the Toprim domain.

This sequence belongs to the RecR family.

In terms of biological role, may play a role in DNA repair. It seems to be involved in an RecBC-independent recombinational process of DNA repair. It may act with RecF and RecO. The sequence is that of Recombination protein RecR from Bacillus cytotoxicus (strain DSM 22905 / CIP 110041 / 391-98 / NVH 391-98).